The following is a 498-amino-acid chain: UDP-N-acetylmuramate--L-alanine ligase (498 aa).

Position 120 to 126 (120 to 126 (GSHGKTT)) interacts with ATP.

It belongs to the MurCDEF family.

Its subcellular location is the cytoplasm. It catalyses the reaction UDP-N-acetyl-alpha-D-muramate + L-alanine + ATP = UDP-N-acetyl-alpha-D-muramoyl-L-alanine + ADP + phosphate + H(+). Its pathway is cell wall biogenesis; peptidoglycan biosynthesis. Functionally, cell wall formation. The sequence is that of UDP-N-acetylmuramate--L-alanine ligase from Rickettsia typhi (strain ATCC VR-144 / Wilmington).